A 138-amino-acid polypeptide reads, in one-letter code: Acidic phospholipase A2 Tbo-E6 (138 aa).

The signal sequence occupies residues 1 to 16; it reads MRTLWILAVLLLGVKG. 7 cysteine pairs are disulfide-bonded: Cys42-Cys131, Cys44-Cys60, Cys59-Cys111, Cys65-Cys138, Cys66-Cys104, Cys73-Cys97, and Cys91-Cys102. Positions 43, 45, and 47 each coordinate Ca(2+). His63 is an active-site residue. Asp64 provides a ligand contact to Ca(2+). The active site involves Asp105.

As to quaternary structure, monomer. Requires Ca(2+) as cofactor. In terms of tissue distribution, expressed by the venom gland.

The protein localises to the secreted. The enzyme catalyses a 1,2-diacyl-sn-glycero-3-phosphocholine + H2O = a 1-acyl-sn-glycero-3-phosphocholine + a fatty acid + H(+). Its function is as follows. Snake venom phospholipase A2 (PLA2) that impairs hemostasis. It weakly inhibits ADP-induced platelet aggregation when tested on platelet rich plasma from human and rabbit blood (15-25% of inhibition at 5-10 ug of enzyme), and dose-dependently inhibits blood coagulation, possibly by inhibiting thrombin activation. Exhibits high hydrolytic activities toward L-dipalmitoyl phosphatidylcholine. PLA2 catalyzes the calcium-dependent hydrolysis of the 2-acyl groups in 3-sn-phosphoglycerides. This is Acidic phospholipase A2 Tbo-E6 from Craspedocephalus borneensis (Borneo pit viper).